The chain runs to 86 residues: Large ribosomal subunit protein bL27 (86 aa).

The interval 1-22 is disordered; sequence MAHKKAGGSSRNGRDSESKRLG.

It belongs to the bacterial ribosomal protein bL27 family.

This Acidithiobacillus ferrooxidans (strain ATCC 23270 / DSM 14882 / CIP 104768 / NCIMB 8455) (Ferrobacillus ferrooxidans (strain ATCC 23270)) protein is Large ribosomal subunit protein bL27.